The primary structure comprises 57 residues: Large ribosomal subunit protein bL32 (57 aa).

It belongs to the bacterial ribosomal protein bL32 family.

The polypeptide is Large ribosomal subunit protein bL32 (Staphylococcus aureus (strain MSSA476)).